Consider the following 210-residue polypeptide: MILREQIDFLIHKRQDDNNNNGEAITDDDPFSSSSWRWGRWIFFIFFIVALLILLFSTAKVNRRRRIMGQAPIRGTAWLTPPTYRQSERDYNGTQRCVEDYVPEYTETANENDLGFYDERGEFHPNGKTEYLAPPPLSEEQASSTDKDLQRPVAAVVRIPSESEFDFNLLRPTMNNFVNGQSNRNEQHSPTVESSSFDVNNAPARAKVSK.

The chain crosses the membrane as a helical span at residues 41 to 61; the sequence is WIFFIFFIVALLILLFSTAKV. The disordered stretch occupies residues 125-149; that stretch reads PNGKTEYLAPPPLSEEQASSTDKDL. Ser-161 carries the post-translational modification Phosphoserine. Positions 175–199 are enriched in polar residues; that stretch reads NNFVNGQSNRNEQHSPTVESSSFDV. The segment at 175-210 is disordered; it reads NNFVNGQSNRNEQHSPTVESSSFDVNNAPARAKVSK. Thr-191 carries the phosphothreonine modification.

This sequence to yeast YBR005W.

It localises to the membrane. The chain is Protein RCR2 (RCR2) from Saccharomyces cerevisiae (strain ATCC 204508 / S288c) (Baker's yeast).